The chain runs to 207 residues: Small ribosomal subunit protein uS4 (207 aa).

The S4 RNA-binding domain occupies 97–165; it reads SRLDNLVFRM…VKLALESKAV (69 aa).

The protein belongs to the universal ribosomal protein uS4 family. As to quaternary structure, part of the 30S ribosomal subunit. Contacts protein S5. The interaction surface between S4 and S5 is involved in control of translational fidelity.

Its function is as follows. One of the primary rRNA binding proteins, it binds directly to 16S rRNA where it nucleates assembly of the body of the 30S subunit. With S5 and S12 plays an important role in translational accuracy. The protein is Small ribosomal subunit protein uS4 of Mycoplasmoides gallisepticum (strain R(low / passage 15 / clone 2)) (Mycoplasma gallisepticum).